Here is a 154-residue protein sequence, read N- to C-terminus: CASP-like protein ARALYDRAFT_485429 (154 aa).

Topologically, residues 1-12 are cytoplasmic; the sequence is MENVPGSFGTSA. The chain crosses the membrane as a helical span at residues 13–33; sequence SFALRFGQTIFSAASLIFMCF. At 34-41 the chain is on the extracellular side; that stretch reads DYDFYDFT. The helical transmembrane segment at 42–62 threads the bilayer; that stretch reads TFCYLATVMAIVTPWSILLAL. The Cytoplasmic segment spans residues 63 to 81; the sequence is TDTYSVLVKLLPQELRVLS. Residues 82 to 102 form a helical membrane-spanning segment; that stretch reads IVFAGDFVLSFLSLGGACAVA. Residues 103-128 are Extracellular-facing; the sequence is SATELLASADGKICDGNLCIQYQVSA. A helical transmembrane segment spans residues 129–149; that stretch reads ALAFLCWFLLLASALFNFWSL. At 150 to 154 the chain is on the cytoplasmic side; that stretch reads PSLYY.

The protein belongs to the Casparian strip membrane proteins (CASP) family. Homodimer and heterodimers.

The protein localises to the cell membrane. The protein is CASP-like protein ARALYDRAFT_485429 of Arabidopsis lyrata subsp. lyrata (Lyre-leaved rock-cress).